The following is a 409-amino-acid chain: Multifunctional CCA protein (409 aa).

ATP is bound by residues G8 and R11. CTP contacts are provided by G8 and R11. Mg(2+)-binding residues include D21 and D23. ATP-binding residues include R91, R137, and R140. The CTP site is built by R91, R137, and R140. Residues 228–329 form the HD domain; that stretch reads SGLHTLSVLE…LELLQSFDVY (102 aa).

Belongs to the tRNA nucleotidyltransferase/poly(A) polymerase family. Bacterial CCA-adding enzyme type 1 subfamily. As to quaternary structure, monomer. Can also form homodimers and oligomers. The cofactor is Mg(2+). Requires Ni(2+) as cofactor.

The catalysed reaction is a tRNA precursor + 2 CTP + ATP = a tRNA with a 3' CCA end + 3 diphosphate. The enzyme catalyses a tRNA with a 3' CCA end + 2 CTP + ATP = a tRNA with a 3' CCACCA end + 3 diphosphate. In terms of biological role, catalyzes the addition and repair of the essential 3'-terminal CCA sequence in tRNAs without using a nucleic acid template. Adds these three nucleotides in the order of C, C, and A to the tRNA nucleotide-73, using CTP and ATP as substrates and producing inorganic pyrophosphate. tRNA 3'-terminal CCA addition is required both for tRNA processing and repair. Also involved in tRNA surveillance by mediating tandem CCA addition to generate a CCACCA at the 3' terminus of unstable tRNAs. While stable tRNAs receive only 3'-terminal CCA, unstable tRNAs are marked with CCACCA and rapidly degraded. The polypeptide is Multifunctional CCA protein (Pseudomonas fluorescens (strain Pf0-1)).